A 390-amino-acid polypeptide reads, in one-letter code: Substance-K receptor (390 aa).

The Extracellular segment spans residues 1–32 (MGTRAIVSDANILSGLESNATGVTAFSMPGWQ). A glycan (N-linked (GlcNAc...) asparagine) is linked at asparagine 19. The chain crosses the membrane as a helical span at residues 33–56 (LALWATAYLALVLVAVTGNATVIW). Residues 57-69 (IILAHERMRTVTN) are Cytoplasmic-facing. Residues 70 to 90 (YFIINLALADLCMAAFNATFN) traverse the membrane as a helical segment. Over 91-107 (FIYASHNIWYFGRAFCY) the chain is Extracellular. Residues cysteine 106 and cysteine 181 are joined by a disulfide bond. The helical transmembrane segment at 108 to 129 (FQNLFPITAMFVSIYSMTAIAA) threads the bilayer. The Cytoplasmic portion of the chain corresponds to 130–149 (DRYMAIVHPFQPRLSAPSTK). The chain crosses the membrane as a helical span at residues 150–170 (AIIAGIWLVALALASPQCFYS). Topologically, residues 171 to 196 (TITVDEGATKCVVAWPNDNGGKMLLL) are extracellular. The helical transmembrane segment at 197–218 (YHLVVFVLIYFLPLLVMFGAYS) threads the bilayer. Topologically, residues 219–251 (VIGLTLWKRAVPRHQAHGANLRHLQAKKKFVKA) are cytoplasmic. A helical membrane pass occupies residues 252-272 (MVLVVLTFAICWLPYHLYFIL). At 273–290 (GTFQEDIYYHKFIQQVYL) the chain is on the extracellular side. The helical transmembrane segment at 291–310 (ALFWLAMSSTMYNPIIYCCL) threads the bilayer. Residues 311–390 (NHRFRSGFRL…PAGPICKAQA (80 aa)) lie on the Cytoplasmic side of the membrane. Cysteine 324 carries S-palmitoyl cysteine lipidation. A disordered region spans residues 365–390 (HSEATNGQVGSPQDGEPAGPICKAQA). The segment covering 366 to 375 (SEATNGQVGS) has biased composition (polar residues).

The protein belongs to the G-protein coupled receptor 1 family.

The protein localises to the cell membrane. This is a receptor for the tachykinin neuropeptide substance K (neurokinin A). It is associated with G proteins that activate a phosphatidylinositol-calcium second messenger system. The rank order of affinity of this receptor to tachykinins is: substance K &gt; neuromedin-K &gt; substance P. In Rattus norvegicus (Rat), this protein is Substance-K receptor (Tacr2).